We begin with the raw amino-acid sequence, 489 residues long: CUGBP Elav-like family member 1-B (489 aa).

RRM domains are found at residues 16-99 (IKMF…PADS), 108-188 (RKLF…FADT), and 404-482 (ANLF…LKRS).

The protein belongs to the CELF/BRUNOL family. As to quaternary structure, oligomer. Oligomerization is required for RNA-binding and EDEN-dependent deadenylation. In terms of processing, phosphorylated during oocyte maturation and dephosphorylated following egg activation. Dephosphorylation is calcium dependent and correlates with the increase in the activity of EDEN-dependent deadenylation.

It is found in the nucleus. It localises to the cytoplasm. Functionally, RNA-binding protein implicated in the regulation of several post-transcriptional events. May be involved in pre-mRNA alternative splicing, mRNA translation activation and stability. Mediates the rapid and sequence-specific cytoplasmic deadenylation of EDEN-containing maternal mRNAs following fertilization. Binds to AU-rich sequences (AREs) of jun mRNA. Binds to the embryonic deadenylation element (EDEN) motif localized in the 3'-UTR of maternal mRNAs. Binds to RNA containing several repeats of the consensus sequence 5'-UGU-3'. EDEN-dependent deadenylation is enhanced by the presence of an additional cis element composed of three AUU repeats. In Xenopus laevis (African clawed frog), this protein is CUGBP Elav-like family member 1-B (cugbp1-b).